The sequence spans 152 residues: Large ribosomal subunit protein bL9 (152 aa).

Belongs to the bacterial ribosomal protein bL9 family.

Binds to the 23S rRNA. The protein is Large ribosomal subunit protein bL9 of Picosynechococcus sp. (strain ATCC 27264 / PCC 7002 / PR-6) (Agmenellum quadruplicatum).